A 563-amino-acid chain; its full sequence is BOS complex subunit NCLN (563 aa).

Residues 1-42 (MLEEAGEVLENMLKASCLPLGFIVFLPAVLLLVAPPLPAADA) form the signal peptide. Residues 43 to 522 (AHEFTVYRMQ…VMNAYRVKPA (480 aa)) lie on the Lumenal side of the membrane. Residues asparagine 241 and asparagine 428 are each glycosylated (N-linked (GlcNAc...) asparagine). The chain crosses the membrane as a helical span at residues 523–543 (VFDLLLAVGIAAYLGMAYVAV). Residues 544 to 563 (QHFSLLYKTVQRLLVKAKTQ) lie on the Cytoplasmic side of the membrane.

It belongs to the nicastrin family. In terms of assembly, component of the back of Sec61 (BOS) complex, composed of NCLN/Nicalin, NOMO (NOMO1, NOMO2 or NOMO3) and TMEM147. The BOS complex is part of the multi-pass translocon (MPT) complex, composed of three subcomplexes, the GEL complex (composed of RAB5IF/OPTI and TMCO1), the BOS complex (composed of NCLN/Nicalin, NOMO and TMEM147) and the PAT complex (composed of WDR83OS/Asterix and CCDC47). The MPT complex associates with the SEC61 complex. In terms of tissue distribution, highly expressed in pancreas and skeletal muscle and, at lower levels, in heart.

The protein resides in the endoplasmic reticulum membrane. Component of the multi-pass translocon (MPT) complex that mediates insertion of multi-pass membrane proteins into the lipid bilayer of membranes. The MPT complex takes over after the SEC61 complex: following membrane insertion of the first few transmembrane segments of proteins by the SEC61 complex, the MPT complex occludes the lateral gate of the SEC61 complex to promote insertion of subsequent transmembrane regions. May antagonize Nodal signaling and subsequent organization of axial structures during mesodermal patterning, via its interaction with NOMO. The sequence is that of BOS complex subunit NCLN from Homo sapiens (Human).